Reading from the N-terminus, the 171-residue chain is Putative metal-dependent hydrolase BH0277 (171 aa).

Zn(2+) is bound by residues His64, His155, and His159.

It belongs to the metal hydrolase YfiT family. As to quaternary structure, homodimer. Zn(2+) is required as a cofactor.

It localises to the cytoplasm. Functionally, possible metal-dependent hydrolase. The chain is Putative metal-dependent hydrolase BH0277 from Halalkalibacterium halodurans (strain ATCC BAA-125 / DSM 18197 / FERM 7344 / JCM 9153 / C-125) (Bacillus halodurans).